Here is a 399-residue protein sequence, read N- to C-terminus: Bombesin receptor subtype-3 (399 aa).

At 1–41 (MSQRQPQSPNQTLISITNDTETSSSAVSNDTTPKGWTGDNS) the chain is on the extracellular side. 3 N-linked (GlcNAc...) asparagine glycosylation sites follow: asparagine 10, asparagine 18, and asparagine 29. The helical transmembrane segment at 42–63 (PGIEALCAIYITYAVIISVGIL) threads the bilayer. Over 64-82 (GNAILIKVFFKTKSMQTVP) the chain is Cytoplasmic. The helical transmembrane segment at 83-103 (NIFITSLAFGDLLLLLTCVPV) threads the bilayer. Residues 104–121 (DATHYLAEGWLFGKVGCK) are Extracellular-facing. Cysteines 120 and 203 form a disulfide. A helical transmembrane segment spans residues 122–143 (VLSFIRLTSVGVSVFTLTILSA). Residues 144–163 (DRYKAVVKPLERQPSNAILK) are Cytoplasmic-facing. The helical transmembrane segment at 164 to 184 (TCAKAGGIWIMAMIFALPEAI) threads the bilayer. The Extracellular segment spans residues 185 to 220 (FSNVYTFQDPNRNVTFESCNSYPISERLLQEIHSLL). The chain crosses the membrane as a helical span at residues 221–241 (CFLVFYIIPLSIISVYYSLIA). At 242 to 272 (RTLYKSTLNIPTEEQSHARKQIESRKRIAKT) the chain is on the cytoplasmic side. The helical transmembrane segment at 273-293 (VLVLVALFALCWLPNHLLYLY) threads the bilayer. Over 294 to 313 (HSFTYESYAEPSDVPFVVTI) the chain is Extracellular. A helical transmembrane segment spans residues 314 to 333 (FSRVLAFSNSCVNPFALYWL). Topologically, residues 334 to 399 (SKTFQKHFKA…STAKKGEDKV (66 aa)) are cytoplasmic. Cysteine 347 is lipidated: S-palmitoyl cysteine.

Belongs to the G-protein coupled receptor 1 family. In terms of assembly, interacts with C6orf89.

It localises to the cell membrane. In terms of biological role, role in sperm cell division, maturation, or function. This receptor mediates its action by association with G proteins that activate a phosphatidylinositol-calcium second messenger system. The polypeptide is Bombesin receptor subtype-3 (Brs3) (Rattus norvegicus (Rat)).